A 741-amino-acid chain; its full sequence is Eukaryotic peptide chain release factor GTP-binding subunit (741 aa).

Positions 5 to 135 (QQQQQQFNAN…SYNNNNNYNN (131 aa)) are several sort of repeats. Positions 59–161 (QQFGQYGQQQ…DQQQETGSGQ (103 aa)) are enriched in low complexity. Disordered regions lie at residues 59 to 186 (QQFG…KKVL) and 199 to 264 (IVTK…KTEA). The interval 162–311 (MSLEDYQKQQ…EQIDASIVND (150 aa)) is charged. 2 stretches are compositionally biased toward basic and acidic residues: residues 166-175 (DYQKQQKESL) and 202-241 (KKKEEEPVNQESKTEEPAKEEIKNQEPAEAENKVEEESKV). Positions 316–541 (KDHMSIIFMG…YLDSMPLAVR (226 aa)) constitute a tr-type G domain. The G1 stretch occupies residues 325–332 (GHVDAGKS). Residue 325–332 (GHVDAGKS) coordinates GTP. Residues 381–385 (GKTIE) are G2. T399 carries the post-translational modification Phosphothreonine. Residues 402-405 (DAPG) form a G3 region. GTP contacts are provided by residues 402 to 406 (DAPGH) and 464 to 467 (NKMD). The G4 stretch occupies residues 464 to 467 (NKMD). The segment at 505 to 507 (SGY) is G5.

Belongs to the TRAFAC class translation factor GTPase superfamily. Classic translation factor GTPase family. ERF3 subfamily.

Its subcellular location is the cytoplasm. In terms of biological role, involved in translation termination. Stimulates the activity of ERF1. Binds guanine nucleotides. This Ogataea pini (Yeast) protein is Eukaryotic peptide chain release factor GTP-binding subunit (SUP2).